The sequence spans 325 residues: Methionyl-tRNA formyltransferase (325 aa).

Residue serine 111–proline 114 participates in (6S)-5,6,7,8-tetrahydrofolate binding.

Belongs to the Fmt family.

The enzyme catalyses L-methionyl-tRNA(fMet) + (6R)-10-formyltetrahydrofolate = N-formyl-L-methionyl-tRNA(fMet) + (6S)-5,6,7,8-tetrahydrofolate + H(+). Attaches a formyl group to the free amino group of methionyl-tRNA(fMet). The formyl group appears to play a dual role in the initiator identity of N-formylmethionyl-tRNA by promoting its recognition by IF2 and preventing the misappropriation of this tRNA by the elongation apparatus. This is Methionyl-tRNA formyltransferase from Microcystis aeruginosa (strain NIES-843 / IAM M-2473).